The chain runs to 103 residues: Phosphoribosyl-ATP pyrophosphatase (103 aa).

This sequence belongs to the PRA-PH family.

It is found in the cytoplasm. The catalysed reaction is 1-(5-phospho-beta-D-ribosyl)-ATP + H2O = 1-(5-phospho-beta-D-ribosyl)-5'-AMP + diphosphate + H(+). It functions in the pathway amino-acid biosynthesis; L-histidine biosynthesis; L-histidine from 5-phospho-alpha-D-ribose 1-diphosphate: step 2/9. The chain is Phosphoribosyl-ATP pyrophosphatase from Cereibacter sphaeroides (strain ATCC 17025 / ATH 2.4.3) (Rhodobacter sphaeroides).